Reading from the N-terminus, the 103-residue chain is Large ribosomal subunit protein P2 (103 aa).

Positions 64–103 (LAISSSQKSEPAQPADTAESTQATENKEEEDEDFDIFAAF) are disordered. Residues 90-103 (KEEEDEDFDIFAAF) are compositionally biased toward acidic residues.

Belongs to the eukaryotic ribosomal protein P1/P2 family. Component of the large ribosomal subunit.

It is found in the cytoplasm. In terms of biological role, plays an important role in the elongation step of protein synthesis. The protein is Large ribosomal subunit protein P2 (RPP2A) of Encephalitozoon cuniculi (strain GB-M1) (Microsporidian parasite).